A 134-amino-acid polypeptide reads, in one-letter code: TSC22 domain family protein 3 (134 aa).

Met1 carries the N-acetylmethionine modification. The interval 1 to 60 (MNTEMYQTPMEVAVYQLHNFSISFFSSLLGGDVVSVKLDNSASGASVVAIDNKIEQAMDL) is AP1-binding. Phosphoserine occurs at positions 42 and 73. Positions 76–97 (LKEQIRELVEKNSQLERENTLL) are leucine-zipper. The residue at position 102 (Ser102) is a Phosphoserine. The segment at 108–134 (KFQSCLSPEEPAPESPQVPEAPGGSAV) is disordered.

The protein belongs to the TSC-22/Dip/Bun family. In terms of assembly, can form homodimers, however it is likely to function as a monomer. Interacts with NFKB1. Interacts (via N-terminus) with JUN and FOS; these interactions inhibit the binding of active AP1 to its target DNA. Interacts with MYOD1. Interacts with HDAC1; this interaction affects HDAC1 activity on MYOG promoter and thus inhibits MYOD1 transcriptional activity. In terms of tissue distribution, ubiquitously expressed, including in the fetal brain and liver. Expressed in brain, lung, spleen and skeletal muscle. Lower levels detected in heart and kidney. Not detected in the pancreas. In non-lymphoid tissues, in the absence of inflammation, the major source of constitutive expression is the macrophage lineage. Also expressed in cells from different hemopoietic cell lineages, including bone marrow cells, CD34+ stem cells, mature B- and T-cells, monocytes and granulocytes. Down-regulated in activated macrophages from inflammatory lesions of delayed-type hypersensitivity (DTH) reactions, such as in tuberculosis and in Crohn disease, whereas in Burkitt lymphoma, persists in macrophages involved in the phagocytosis of apoptotic malignant cells.

It is found in the cytoplasm. The protein localises to the nucleus. Protects T-cells from IL2 deprivation-induced apoptosis through the inhibition of FOXO3A transcriptional activity that leads to the down-regulation of the pro-apoptotic factor BCL2L11. In macrophages, plays a role in the anti-inflammatory and immunosuppressive effects of glucocorticoids and IL10. In T-cells, inhibits anti-CD3-induced NFKB1 nuclear translocation and thereby NFKB1 DNA-binding activities. In vitro, suppresses AP-1 transcription factor complex DNA-binding activities. Its function is as follows. Inhibits myogenic differentiation and mediates anti-myogenic effects of glucocorticoids by binding and regulating MYOD1 and HDAC1 transcriptional activity resulting in reduced expression of MYOG. The chain is TSC22 domain family protein 3 from Homo sapiens (Human).